The following is a 378-amino-acid chain: Phosphatidyl-myo-inositol mannosyltransferase (378 aa).

GDP-alpha-D-mannose is bound by residues Y9 and G16. A 1,2-diacyl-sn-glycero-3-phospho-(1D-myo-inositol) contacts are provided by residues Q18, Y62–N63, and R68. GDP-alpha-D-mannose-binding positions include R196, R201–K202, V251–D253, K256, E274–I278, and E282.

It belongs to the glycosyltransferase group 1 family. Monomer. Mg(2+) is required as a cofactor.

Its subcellular location is the cell membrane. It carries out the reaction a 1,2-diacyl-sn-glycero-3-phospho-(1D-myo-inositol) + GDP-alpha-D-mannose = a 1,2-diacyl-sn-glycero-3-phospho-[alpha-D-mannopyranosyl-(1&lt;-&gt;6)-D-myo-inositol] + GDP + H(+). It functions in the pathway phospholipid metabolism; phosphatidylinositol metabolism. Its function is as follows. Involved in the biosynthesis of phosphatidyl-myo-inositol mannosides (PIM) which are early precursors in the biosynthesis of lipomannans (LM) and lipoarabinomannans (LAM). Catalyzes the addition of a mannosyl residue from GDP-D-mannose (GDP-Man) to the position 2 of the carrier lipid phosphatidyl-myo-inositol (PI) to generate a phosphatidyl-myo-inositol bearing an alpha-1,2-linked mannose residue (PIM1). The chain is Phosphatidyl-myo-inositol mannosyltransferase from Mycobacterium bovis (strain ATCC BAA-935 / AF2122/97).